We begin with the raw amino-acid sequence, 257 residues long: Glutamate racemase (257 aa).

Substrate contacts are provided by residues D12–S13 and Y44–G45. C75 (proton donor/acceptor) is an active-site residue. N76–T77 provides a ligand contact to substrate. C185 (proton donor/acceptor) is an active-site residue. T186–H187 contributes to the substrate binding site.

The protein belongs to the aspartate/glutamate racemases family.

It carries out the reaction L-glutamate = D-glutamate. It functions in the pathway cell wall biogenesis; peptidoglycan biosynthesis. Provides the (R)-glutamate required for cell wall biosynthesis. In Clostridium botulinum (strain ATCC 19397 / Type A), this protein is Glutamate racemase.